The following is a 267-amino-acid chain: Heme-containing CO-sensing transcriptional regulator RcoM 2 (267 aa).

Residues 15-86 enclose the PAS domain; that stretch reads RAETFQHKLE…KSRDKLRFLL (72 aa). Residues His74 and Met104 each coordinate heme. An HTH LytTR-type domain is found at 161–266; it reads IPVYRKSRVI…TAQLKELLGV (106 aa).

The cofactor is heme.

The protein localises to the cytoplasm. Functionally, one-component, b-type heme-containing aerobic sensor and transcriptional regulator that responds to CO by activating the expression of the oxidation operon cox. This Paraburkholderia xenovorans (strain LB400) protein is Heme-containing CO-sensing transcriptional regulator RcoM 2 (rcoM2).